We begin with the raw amino-acid sequence, 102 residues long: Thioredoxin (102 aa).

The Thioredoxin domain occupies 2–102 (VTEIRSLKQL…KTKIIDLFNN (101 aa)). Cysteine 30 and cysteine 33 are oxidised to a cystine.

Belongs to the thioredoxin family.

Its function is as follows. Participates in various redox reactions through the reversible oxidation of its active center dithiol to a disulfide and catalyzes dithiol-disulfide exchange reactions. This is Thioredoxin (trxA) from Mycoplasma genitalium (strain ATCC 33530 / DSM 19775 / NCTC 10195 / G37) (Mycoplasmoides genitalium).